We begin with the raw amino-acid sequence, 344 residues long: 3,4-dihydroxy-2-butanone 4-phosphate synthase (344 aa).

Residues 1-202 (MILKRVTEAL…VSDLISYRLE (202 aa)) are DHBP synthase. D-ribulose 5-phosphate contacts are provided by residues 27-28 (RE), Asp-32, 139-143 (RTGHT), and Glu-163. Glu-28 serves as a coordination point for Mg(2+). Residue His-142 participates in Mg(2+) binding. The segment at 203-344 (NESLLKMFCQ…GLKLVETISL (142 aa)) is GTP cyclohydrolase II-like.

It in the N-terminal section; belongs to the DHBP synthase family. In the C-terminal section; belongs to the GTP cyclohydrolase II family. It depends on Mg(2+) as a cofactor. Requires Mn(2+) as cofactor.

It catalyses the reaction D-ribulose 5-phosphate = (2S)-2-hydroxy-3-oxobutyl phosphate + formate + H(+). Its pathway is cofactor biosynthesis; riboflavin biosynthesis; 2-hydroxy-3-oxobutyl phosphate from D-ribulose 5-phosphate: step 1/1. Its function is as follows. Catalyzes the conversion of D-ribulose 5-phosphate to formate and 3,4-dihydroxy-2-butanone 4-phosphate. The protein is 3,4-dihydroxy-2-butanone 4-phosphate synthase (ribB) of Helicobacter pylori (strain ATCC 700392 / 26695) (Campylobacter pylori).